Reading from the N-terminus, the 349-residue chain is Protein RecA (349 aa).

Residue 65 to 72 (GPESSGKT) participates in ATP binding.

It belongs to the RecA family.

The protein localises to the cytoplasm. In terms of biological role, can catalyze the hydrolysis of ATP in the presence of single-stranded DNA, the ATP-dependent uptake of single-stranded DNA by duplex DNA, and the ATP-dependent hybridization of homologous single-stranded DNAs. It interacts with LexA causing its activation and leading to its autocatalytic cleavage. In Vibrio vulnificus (strain CMCP6), this protein is Protein RecA.